Here is a 338-residue protein sequence, read N- to C-terminus: Glycerol-3-phosphate dehydrogenase [NAD(P)+] (338 aa).

Residues serine 13, tryptophan 14, and lysine 108 each contribute to the NADPH site. The sn-glycerol 3-phosphate site is built by lysine 108, glycine 139, and serine 141. Residue alanine 143 participates in NADPH binding. 5 residues coordinate sn-glycerol 3-phosphate: lysine 194, aspartate 247, serine 257, arginine 258, and asparagine 259. Lysine 194 functions as the Proton acceptor in the catalytic mechanism. Arginine 258 is an NADPH binding site. Residues valine 282 and glutamate 284 each coordinate NADPH.

This sequence belongs to the NAD-dependent glycerol-3-phosphate dehydrogenase family.

Its subcellular location is the cytoplasm. The enzyme catalyses sn-glycerol 3-phosphate + NAD(+) = dihydroxyacetone phosphate + NADH + H(+). It carries out the reaction sn-glycerol 3-phosphate + NADP(+) = dihydroxyacetone phosphate + NADPH + H(+). It functions in the pathway membrane lipid metabolism; glycerophospholipid metabolism. Its function is as follows. Catalyzes the reduction of the glycolytic intermediate dihydroxyacetone phosphate (DHAP) to sn-glycerol 3-phosphate (G3P), the key precursor for phospholipid synthesis. The sequence is that of Glycerol-3-phosphate dehydrogenase [NAD(P)+] from Listeria monocytogenes serotype 4a (strain HCC23).